Consider the following 729-residue polypeptide: Replication restart protein PriA (729 aa).

In terms of domain architecture, Helicase ATP-binding spans 209-376; sequence QTALGRFRSF…QSGAYRLLQL (168 aa). 222-229 provides a ligand contact to ATP; sequence GITGSGKT. The DEAH box signature appears at 319–322; sequence DEEH. The Zn(2+) site is built by Cys436, Cys439, Cys445, Cys448, Cys463, Cys466, Cys476, and Cys479. The Helicase C-terminal domain maps to 471-623; that stretch reads PIPFKCPDCG…YAVFAENELN (153 aa).

Belongs to the helicase family. PriA subfamily. In terms of assembly, interacts with PriB with high affinity in the absence of DNA. Component of the replication restart primosome. Zn(2+) serves as cofactor.

The enzyme catalyses Couples ATP hydrolysis with the unwinding of duplex DNA by translocating in the 3'-5' direction.. It carries out the reaction ATP + H2O = ADP + phosphate + H(+). With respect to regulation, helicase and ATPase activities on forked DNA are stimulated by PriB; E.coli PriB does not stimulate this helicase. PriA:PriB complex-catalyzed duplex DNA winding is inhibited by CGS 15943 (CHEBI:131351). CGS 15943 decreases ATP hydrolysis and decreases PriA's affinity for DNA. Functionally, initiates the restart of stalled replication forks, which reloads the replicative helicase on sites other than the origin of replication. Recognizes and binds to abandoned replication forks and remodels them to uncover a helicase loading site. Promotes assembly of the primosome at these replication forks. DNA helicase with greatest unwinding activity on forked DNA substrates with relatively short duplex lagging strand arms. A DNA-dependent ATPase. Required for DNA transformation and DNA repair. Binds single-stranded (ss)DNA and replication fork-like DNA but not double-stranded (ds)DNA. This is Replication restart protein PriA from Neisseria gonorrhoeae (strain ATCC 700825 / FA 1090).